The chain runs to 179 residues: UPF0303 protein YBR137W (179 aa).

The protein belongs to the UPF0303 family.

It is found in the cytoplasm. The sequence is that of UPF0303 protein YBR137W from Saccharomyces cerevisiae (strain ATCC 204508 / S288c) (Baker's yeast).